We begin with the raw amino-acid sequence, 336 residues long: Shematrin-like protein 1 (336 aa).

An N-terminal signal peptide occupies residues 1–16; that stretch reads MLRFIAIVALIATVNA.

As to expression, prismatic layer of shell (at protein level). Expressed primarily in the mantle with highest level in the mantle edge and lower level in the mantle pallium.

The protein localises to the secreted. This is Shematrin-like protein 1 from Pinctada maxima (Silver-lipped pearl oyster).